The following is a 724-amino-acid chain: 4-alpha-glucanotransferase (724 aa).

It belongs to the disproportionating enzyme family.

The protein localises to the cytoplasm. The enzyme catalyses Transfers a segment of a (1-&gt;4)-alpha-D-glucan to a new position in an acceptor, which may be glucose or a (1-&gt;4)-alpha-D-glucan.. The chain is 4-alpha-glucanotransferase (malQ) from Mycobacterium bovis (strain ATCC BAA-935 / AF2122/97).